Reading from the N-terminus, the 414-residue chain is Translation initiation factor 2 subunit gamma (414 aa).

A tr-type G domain is found at 8–206 (QPEVNIGVVG…AIEKFIPTPP (199 aa)). Residues 17 to 24 (GHVDHGKT) form a G1 region. 4 residues coordinate Mg(2+): D20, T24, G45, and T47. Residue 20-25 (DHGKTT) coordinates GTP. Residues 45 to 49 (GMTIK) are G2. Zn(2+)-binding residues include C60, C63, C75, and C77. Residues 93-96 (DAPG) form a G3 region. Residues 149–152 (NKVD) and 184–186 (SAL) contribute to the GTP site. The segment at 149-152 (NKVD) is G4. The G5 stretch occupies residues 184–186 (SAL).

This sequence belongs to the TRAFAC class translation factor GTPase superfamily. Classic translation factor GTPase family. EIF2G subfamily. As to quaternary structure, heterotrimer composed of an alpha, a beta and a gamma chain. Requires Mg(2+) as cofactor.

The enzyme catalyses GTP + H2O = GDP + phosphate + H(+). Its function is as follows. eIF-2 functions in the early steps of protein synthesis by forming a ternary complex with GTP and initiator tRNA. This chain is Translation initiation factor 2 subunit gamma, found in Aeropyrum pernix (strain ATCC 700893 / DSM 11879 / JCM 9820 / NBRC 100138 / K1).